Here is a 113-residue protein sequence, read N- to C-terminus: Carrot ABA-induced in somatic embryos 3 (113 aa).

Basic and acidic residues-rich tracts occupy residues 1–17 (MASG…RAKQ), 32–52 (EAQE…KEQL), and 65–77 (GETR…KEGY). Residues 1-113 (MASGQEKRSE…IDQSKFRTKS (113 aa)) are disordered.

It belongs to the small hydrophilic plant seed protein family. Expressed in embryogenic cells, somatic embryos and seeds at the later stages of development. Not detected in leaves.

This Daucus carota (Wild carrot) protein is Carrot ABA-induced in somatic embryos 3.